The following is a 62-amino-acid chain: LTCFNDFSPTAHTVEDCQRGITTCYMKTWRVHRETVIERGCGCPKVKPGIRLKCCTGNTCNY.

Cystine bridges form between cysteine 3/cysteine 24, cysteine 17/cysteine 41, cysteine 43/cysteine 54, and cysteine 55/cysteine 60.

In terms of tissue distribution, expressed by the venom gland.

The protein localises to the secreted. In terms of biological role, binds to muscle nicotinic acetylcholine receptor (nAChR) and inhibit acetylcholine from binding to the receptor, thereby impairing neuromuscular transmission. This Micrurus frontalis (Coral snake) protein is Frontoxin III.